The sequence spans 210 residues: Small ribosomal subunit protein uS3 (210 aa).

The region spanning 38-106 (LKSFLKKRLY…EVYLNIQEVR (69 aa)) is the KH type-2 domain.

The protein belongs to the universal ribosomal protein uS3 family. In terms of assembly, part of the 30S ribosomal subunit. Forms a tight complex with proteins S10 and S14.

Binds the lower part of the 30S subunit head. Binds mRNA in the 70S ribosome, positioning it for translation. This is Small ribosomal subunit protein uS3 from Geotalea daltonii (strain DSM 22248 / JCM 15807 / FRC-32) (Geobacter daltonii).